A 318-amino-acid polypeptide reads, in one-letter code: Aspartate carbamoyltransferase catalytic subunit (318 aa).

Carbamoyl phosphate is bound by residues R56 and T57. Residue K84 coordinates L-aspartate. Carbamoyl phosphate is bound by residues R106, H143, and Q146. 2 residues coordinate L-aspartate: R176 and R230. Residues G271 and P272 each coordinate carbamoyl phosphate.

It belongs to the aspartate/ornithine carbamoyltransferase superfamily. ATCase family. As to quaternary structure, heterododecamer (2C3:3R2) of six catalytic PyrB chains organized as two trimers (C3), and six regulatory PyrI chains organized as three dimers (R2).

It carries out the reaction carbamoyl phosphate + L-aspartate = N-carbamoyl-L-aspartate + phosphate + H(+). Its pathway is pyrimidine metabolism; UMP biosynthesis via de novo pathway; (S)-dihydroorotate from bicarbonate: step 2/3. Catalyzes the condensation of carbamoyl phosphate and aspartate to form carbamoyl aspartate and inorganic phosphate, the committed step in the de novo pyrimidine nucleotide biosynthesis pathway. The protein is Aspartate carbamoyltransferase catalytic subunit of Mycobacterium avium (strain 104).